The following is a 355-amino-acid chain: Histidinol-phosphate aminotransferase 2 (355 aa).

Lysine 213 carries the post-translational modification N6-(pyridoxal phosphate)lysine.

The protein belongs to the class-II pyridoxal-phosphate-dependent aminotransferase family. Histidinol-phosphate aminotransferase subfamily. As to quaternary structure, homodimer. Pyridoxal 5'-phosphate is required as a cofactor.

It carries out the reaction L-histidinol phosphate + 2-oxoglutarate = 3-(imidazol-4-yl)-2-oxopropyl phosphate + L-glutamate. Its pathway is amino-acid biosynthesis; L-histidine biosynthesis; L-histidine from 5-phospho-alpha-D-ribose 1-diphosphate: step 7/9. This Burkholderia lata (strain ATCC 17760 / DSM 23089 / LMG 22485 / NCIMB 9086 / R18194 / 383) protein is Histidinol-phosphate aminotransferase 2.